We begin with the raw amino-acid sequence, 395 residues long: Succinyl-diaminopimelate desuccinylase (395 aa).

Residue His-74 participates in Zn(2+) binding. The active site involves Asp-76. Asp-107 is a binding site for Zn(2+). Glu-141 (proton acceptor) is an active-site residue. Zn(2+) is bound by residues Glu-142, Glu-170, and His-368.

It belongs to the peptidase M20A family. DapE subfamily. In terms of assembly, homodimer. Requires Zn(2+) as cofactor. The cofactor is Co(2+).

It carries out the reaction N-succinyl-(2S,6S)-2,6-diaminopimelate + H2O = (2S,6S)-2,6-diaminopimelate + succinate. Its pathway is amino-acid biosynthesis; L-lysine biosynthesis via DAP pathway; LL-2,6-diaminopimelate from (S)-tetrahydrodipicolinate (succinylase route): step 3/3. Its function is as follows. Catalyzes the hydrolysis of N-succinyl-L,L-diaminopimelic acid (SDAP), forming succinate and LL-2,6-diaminopimelate (DAP), an intermediate involved in the bacterial biosynthesis of lysine and meso-diaminopimelic acid, an essential component of bacterial cell walls. The protein is Succinyl-diaminopimelate desuccinylase of Brucella abortus (strain S19).